The primary structure comprises 166 residues: NADH-quinone oxidoreductase subunit E (166 aa).

[2Fe-2S] cluster contacts are provided by cysteine 92, cysteine 97, cysteine 133, and cysteine 137.

The protein belongs to the complex I 24 kDa subunit family. In terms of assembly, composed of 13 different subunits. Subunits NuoCD, E, F, and G constitute the peripheral sector of the complex. It depends on [2Fe-2S] cluster as a cofactor.

The catalysed reaction is a quinone + NADH + 5 H(+)(in) = a quinol + NAD(+) + 4 H(+)(out). Functionally, NDH-1 shuttles electrons from NADH, via FMN and iron-sulfur (Fe-S) centers, to quinones in the respiratory chain. The immediate electron acceptor for the enzyme in this species is believed to be ubiquinone. Couples the redox reaction to proton translocation (for every two electrons transferred, four hydrogen ions are translocated across the cytoplasmic membrane), and thus conserves the redox energy in a proton gradient. This is NADH-quinone oxidoreductase subunit E (nuoE) from Shigella flexneri.